Consider the following 209-residue polypeptide: Ribosomal RNA large subunit methyltransferase E (209 aa).

S-adenosyl-L-methionine is bound by residues Gly-63, Trp-65, Asp-83, Asp-99, and Asp-124. Lys-164 acts as the Proton acceptor in catalysis.

Belongs to the class I-like SAM-binding methyltransferase superfamily. RNA methyltransferase RlmE family.

The protein localises to the cytoplasm. The catalysed reaction is uridine(2552) in 23S rRNA + S-adenosyl-L-methionine = 2'-O-methyluridine(2552) in 23S rRNA + S-adenosyl-L-homocysteine + H(+). In terms of biological role, specifically methylates the uridine in position 2552 of 23S rRNA at the 2'-O position of the ribose in the fully assembled 50S ribosomal subunit. This Sodalis glossinidius (strain morsitans) protein is Ribosomal RNA large subunit methyltransferase E.